A 451-amino-acid chain; its full sequence is Phosphoglucosamine mutase (451 aa).

The active-site Phosphoserine intermediate is the serine 101. Serine 101, aspartate 240, aspartate 242, and aspartate 244 together coordinate Mg(2+). Phosphoserine is present on serine 101.

This sequence belongs to the phosphohexose mutase family. The cofactor is Mg(2+). Activated by phosphorylation.

The enzyme catalyses alpha-D-glucosamine 1-phosphate = D-glucosamine 6-phosphate. Catalyzes the conversion of glucosamine-6-phosphate to glucosamine-1-phosphate. This Alkalilimnicola ehrlichii (strain ATCC BAA-1101 / DSM 17681 / MLHE-1) protein is Phosphoglucosamine mutase.